A 265-amino-acid chain; its full sequence is Polyphosphate glucokinase (265 aa).

The segment covering 1-18 has biased composition (polar residues); it reads MTSTGPETSETPGATTQR. The disordered stretch occupies residues 1 to 22; sequence MTSTGPETSETPGATTQRHGFG. 24 to 29 lines the ATP pocket; the sequence is DVGGSG.

It belongs to the ROK (NagC/XylR) family. As to quaternary structure, homodimer.

The enzyme catalyses [phosphate](n) + D-glucose = [phosphate](n-1) + D-glucose 6-phosphate + H(+). The catalysed reaction is D-glucose + ATP = D-glucose 6-phosphate + ADP + H(+). In terms of biological role, catalyzes the phosphorylation of glucose using polyphosphate or ATP as the phosphoryl donor. Polyphosphate, rather than ATP, seems to be the major phosphate donor for the enzyme in M.tuberculosis. GTP, UTP and CTP can replace ATP as phosphoryl donor. This Mycobacterium tuberculosis (strain ATCC 25177 / H37Ra) protein is Polyphosphate glucokinase (ppgK).